Consider the following 475-residue polypeptide: MPQTPIFPSMLGSTCSGQVQPEMGEHCGDPVYQDGSLVSGSLEVLIERLVPTLDYYPDKTYIFTFLLSARIFIHPYEILAKVGQMCIKQKQQLESGSEADKAKLKSFAAKIIQLLREWTETFPFDFQDERARKEMKEIAQRITQCDEENGTIKKSISQMTQNVLVVLSTRGQFQEVREKIRQPVSDKGTILKTKPQSAQKDILSVCSDPLILAQQLTTIELERLGNIFPEDLMQIISHMDSLDNHKCRSDVTKTYNLEAYDNWFNCLSMLVATEICKVVKKKQRTRVMEFFIDVARECFNIGNFNSMMAIISGMNLSPVARLKKTWSKVKTAKFDVLEHHMDPSSNFCNYRTALQGATQRSQSANSSREKIVIPVFNLFIKDIFFLHKIHSNRLPNGHINFKKFWEISRQIHDFLTWKQVECPYEKDKKIQTYLLTTPIYTEEALFLASFENEGPDNHMEKDSWKTLRSTLLNRA.

The region spanning 33 to 164 (QDGSLVSGSL…SISQMTQNVL (132 aa)) is the N-terminal Ras-GEF domain. One can recognise a Ras-GEF domain in the interval 208-455 (DPLILAQQLT…FLASFENEGP (248 aa)).

In terms of biological role, guanine nucleotide exchange factor (GEF) with specificity for rap2a and other Ras family proteins (in vitro). Plays a role in cell migration. The polypeptide is Ras-GEF domain-containing family member 1A (rasgef1a) (Xenopus tropicalis (Western clawed frog)).